Consider the following 426-residue polypeptide: Vacuole membrane protein hfl11 (426 aa).

5 consecutive transmembrane segments (helical) span residues 39 to 59, 73 to 93, 133 to 153, 172 to 192, and 223 to 243; these read SVVR…LSVY, IYEA…LGGE, GILQ…LTKV, IGLV…TFWV, and VLSI…YSLL. Phosphoserine is present on Ser364. Positions 386–409 are ATG8-interacting region; the sequence is LQFEIDDEMEPLYNQAKQMRYGDY.

Belongs to the TMEM184 family. As to quaternary structure, interacts with atg8.

Its subcellular location is the vacuole membrane. Functionally, vacuole membrane protein that recruits ATG8 to facilitate the degradation of vacuolar integral membrane proteins during early-stationary vacuole turnover (EVT) when cells enter stationary phase. The protein is Vacuole membrane protein hfl11 of Schizosaccharomyces pombe (strain 972 / ATCC 24843) (Fission yeast).